Reading from the N-terminus, the 601-residue chain is DNA topoisomerase I, mitochondrial (601 aa).

Residues 1–50 constitute a mitochondrion transit peptide; that stretch reads MRVVRLLRLRAALTLLGEVPRRPASRGVPGSRRTQKGSGARWEKEKHEDG. The disordered stretch occupies residues 22-48; that stretch reads RPASRGVPGSRRTQKGSGARWEKEKHE. Interaction with DNA regions lie at residues 261-262, 324-329, and 421-423; these read KY, RAGNEK, and TAK. The Topo IB-type catalytic domain maps to 268-601; sequence CSKLKGETAW…LAMAGEDFEF (334 aa). The active-site O-(3'-phospho-DNA)-tyrosine intermediate is tyrosine 559.

Belongs to the type IB topoisomerase family. Ca(2+) is required as a cofactor. It depends on Mg(2+) as a cofactor. In terms of tissue distribution, ubiquitous; highest in skeletal muscle, heart, brain and fetal liver.

Its subcellular location is the mitochondrion. The catalysed reaction is ATP-independent breakage of single-stranded DNA, followed by passage and rejoining.. Its function is as follows. Releases the supercoiling and torsional tension of DNA introduced during duplication of mitochondrial DNA by transiently cleaving and rejoining one strand of the DNA duplex. Introduces a single-strand break via transesterification at a target site in duplex DNA. The scissile phosphodiester is attacked by the catalytic tyrosine of the enzyme, resulting in the formation of a DNA-(3'-phosphotyrosyl)-enzyme intermediate and the expulsion of a 5'-OH DNA strand. The free DNA strand then rotates around the intact phosphodiester bond on the opposing strand, thus removing DNA supercoils. Finally, in the religation step, the DNA 5'-OH attacks the covalent intermediate to expel the active-site tyrosine and restore the DNA phosphodiester backbone. The polypeptide is DNA topoisomerase I, mitochondrial (TOP1MT) (Homo sapiens (Human)).